A 356-amino-acid polypeptide reads, in one-letter code: Heme A synthase (356 aa).

5 helical membrane-spanning segments follow: residues 23–43 (IAIW…VGGV), 105–125 (FHRL…LYFL), 141–161 (IFLL…SGLV), 173–193 (AHLG…LDLL), and 212–232 (STML…VAGI). Heme is bound at residue His274. 3 helical membrane passes run 276 to 296 (LIAW…RAVP), 307 to 327 (LLLI…LLVV), and 329 to 349 (LTLA…ALWV). Position 335 (His335) interacts with heme.

Belongs to the COX15/CtaA family. Type 2 subfamily. As to quaternary structure, interacts with CtaB. Requires heme b as cofactor.

It is found in the cell membrane. It carries out the reaction Fe(II)-heme o + 2 A + H2O = Fe(II)-heme a + 2 AH2. The protein operates within porphyrin-containing compound metabolism; heme A biosynthesis; heme A from heme O: step 1/1. In terms of biological role, catalyzes the conversion of heme O to heme A by two successive hydroxylations of the methyl group at C8. The first hydroxylation forms heme I, the second hydroxylation results in an unstable dihydroxymethyl group, which spontaneously dehydrates, resulting in the formyl group of heme A. This Nitrosospira multiformis (strain ATCC 25196 / NCIMB 11849 / C 71) protein is Heme A synthase.